A 147-amino-acid polypeptide reads, in one-letter code: D-aminoacyl-tRNA deacylase (147 aa).

The Gly-cisPro motif, important for rejection of L-amino acids signature appears at 136-137 (GP).

The protein belongs to the DTD family. In terms of assembly, homodimer.

The protein resides in the cytoplasm. The catalysed reaction is glycyl-tRNA(Ala) + H2O = tRNA(Ala) + glycine + H(+). The enzyme catalyses a D-aminoacyl-tRNA + H2O = a tRNA + a D-alpha-amino acid + H(+). An aminoacyl-tRNA editing enzyme that deacylates mischarged D-aminoacyl-tRNAs. Also deacylates mischarged glycyl-tRNA(Ala), protecting cells against glycine mischarging by AlaRS. Acts via tRNA-based rather than protein-based catalysis; rejects L-amino acids rather than detecting D-amino acids in the active site. By recycling D-aminoacyl-tRNA to D-amino acids and free tRNA molecules, this enzyme counteracts the toxicity associated with the formation of D-aminoacyl-tRNA entities in vivo and helps enforce protein L-homochirality. The chain is D-aminoacyl-tRNA deacylase from Streptococcus sanguinis (strain SK36).